The chain runs to 267 residues: 4-hydroxy-tetrahydrodipicolinate reductase (267 aa).

NAD(+) contacts are provided by residues Gly9–Met14 and Asp35. Position 36 (Arg36) interacts with NADP(+). Residues Gly98–Thr100 and Ala122–Met125 each bind NAD(+). The active-site Proton donor/acceptor is His155. His156 contacts (S)-2,3,4,5-tetrahydrodipicolinate. Catalysis depends on Lys159, which acts as the Proton donor. A (S)-2,3,4,5-tetrahydrodipicolinate-binding site is contributed by Gly165–Thr166.

This sequence belongs to the DapB family.

Its subcellular location is the cytoplasm. The catalysed reaction is (S)-2,3,4,5-tetrahydrodipicolinate + NAD(+) + H2O = (2S,4S)-4-hydroxy-2,3,4,5-tetrahydrodipicolinate + NADH + H(+). It carries out the reaction (S)-2,3,4,5-tetrahydrodipicolinate + NADP(+) + H2O = (2S,4S)-4-hydroxy-2,3,4,5-tetrahydrodipicolinate + NADPH + H(+). It participates in amino-acid biosynthesis; L-lysine biosynthesis via DAP pathway; (S)-tetrahydrodipicolinate from L-aspartate: step 4/4. Catalyzes the conversion of 4-hydroxy-tetrahydrodipicolinate (HTPA) to tetrahydrodipicolinate. This Thiobacillus denitrificans (strain ATCC 25259 / T1) protein is 4-hydroxy-tetrahydrodipicolinate reductase.